Here is a 201-residue protein sequence, read N- to C-terminus: Peptide deformylase (201 aa).

Residues C92 and H134 each contribute to the Fe cation site. E135 is an active-site residue. A Fe cation-binding site is contributed by H138.

The protein belongs to the polypeptide deformylase family. Requires Fe(2+) as cofactor.

The catalysed reaction is N-terminal N-formyl-L-methionyl-[peptide] + H2O = N-terminal L-methionyl-[peptide] + formate. In terms of biological role, removes the formyl group from the N-terminal Met of newly synthesized proteins. Requires at least a dipeptide for an efficient rate of reaction. N-terminal L-methionine is a prerequisite for activity but the enzyme has broad specificity at other positions. In Rhodopirellula baltica (strain DSM 10527 / NCIMB 13988 / SH1), this protein is Peptide deformylase.